A 157-amino-acid polypeptide reads, in one-letter code: Putative pre-16S rRNA nuclease (157 aa).

The protein belongs to the YqgF nuclease family.

The protein resides in the cytoplasm. Its function is as follows. Could be a nuclease involved in processing of the 5'-end of pre-16S rRNA. The protein is Putative pre-16S rRNA nuclease of Parasynechococcus marenigrum (strain WH8102).